Consider the following 318-residue polypeptide: Taste receptor type 2 member 7 (318 aa).

At Met1–Leu9 the chain is on the extracellular side. Residues Leu10–Val30 form a helical membrane-spanning segment. Residues Asn31 to Arg55 lie on the Cytoplasmic side of the membrane. The chain crosses the membrane as a helical span at residues Ile56–Tyr76. Residues Ala77–His94 lie on the Extracellular side of the membrane. Residues Leu95–Phe115 traverse the membrane as a helical segment. The Cytoplasmic portion of the chain corresponds to His116–Arg128. A helical membrane pass occupies residues Val129–Thr149. Topologically, residues Glu150–Asn187 are extracellular. Asn167 is a glycosylation site (N-linked (GlcNAc...) asparagine). A helical transmembrane segment spans residues Leu188 to Leu208. The Cytoplasmic segment spans residues Trp209–Lys235. The helical transmembrane segment at Ala236 to Ser256 threads the bilayer. At Ser257–Ala266 the chain is on the extracellular side. A helical membrane pass occupies residues Val267–Leu287. Topologically, residues Gly288–Ile318 are cytoplasmic.

This sequence belongs to the G-protein coupled receptor T2R family.

It localises to the membrane. Gustducin-coupled receptor implicated in the perception of bitter compounds in the oral cavity and the gastrointestinal tract. Signals through PLCB2 and the calcium-regulated cation channel TRPM5. This chain is Taste receptor type 2 member 7 (TAS2R7), found in Macaca mulatta (Rhesus macaque).